The chain runs to 750 residues: Phosphate transporter PHO1 homolog 7 (750 aa).

The SPX domain occupies 1–298 (MKFGKDFVRQ…SRSAAKPYME (298 aa)). The Cytoplasmic segment spans residues 1-350 (MKFGKDFVRQ…KVKKEKHRIT (350 aa)). A helical transmembrane segment spans residues 351 to 371 (FSTGFFVGCTVSLVVALVMFI). Topologically, residues 372–391 (HARNIMGAVGHKVYMETMFP) are extracellular. The chain crosses the membrane as a helical span at residues 392 to 412 (LYSLFAFVVLHMIMYASNIYF). At 413 to 435 (WKRYRVNYPFIFGFKEGTELGYR) the chain is on the cytoplasmic side. The helical transmembrane segment at 436–456 (HVLLLSFGLGTLALCAVLINL) threads the bilayer. At 457–472 (DMEMDPNTNDYKTMTE) the chain is on the extracellular side. The helical transmembrane segment at 473–493 (LLPMFILALVVAILFCPFNIF) threads the bilayer. Residues 494-622 (YRSSRVFFLM…YSFNRGNIWK (129 aa)) lie on the Cytoplasmic side of the membrane. In terms of domain architecture, EXS spans 557–750 (RSSDVYSTFY…NYNEEEDRDS (194 aa)). The chain crosses the membrane as a helical span at residues 623–643 (ISAWVFSALATFYGTYWDIVF). Residues 644-666 (DWGLLHRPSKHLLREKLLVPHKA) lie on the Extracellular side of the membrane. The chain crosses the membrane as a helical span at residues 667–687 (VYYVAIVLNIVLRMAWLQTVL). Residues 688 to 750 (DFNLSFLHRE…NYNEEEDRDS (63 aa)) are Cytoplasmic-facing.

This sequence belongs to the SYG1 (TC 2.A.94) family. As to expression, expressed in root tips, vascular cylinders of roots and filaments, leaf hydathodes, stem, receptacle and stigma apex.

The protein resides in the cell membrane. Functionally, may transport inorganic phosphate (Pi). In Arabidopsis thaliana (Mouse-ear cress), this protein is Phosphate transporter PHO1 homolog 7 (PHO1-H7).